Reading from the N-terminus, the 360-residue chain is 3-dehydroquinate synthase (360 aa).

NAD(+)-binding positions include 70–75, 104–108, 128–129, Lys-141, and Lys-150; these read DGEKYK, GVIGD, and TT. Zn(2+) contacts are provided by Glu-183, His-246, and His-263.

Belongs to the sugar phosphate cyclases superfamily. Dehydroquinate synthase family. Co(2+) serves as cofactor. The cofactor is Zn(2+). Requires NAD(+) as cofactor.

It is found in the cytoplasm. The catalysed reaction is 7-phospho-2-dehydro-3-deoxy-D-arabino-heptonate = 3-dehydroquinate + phosphate. Its pathway is metabolic intermediate biosynthesis; chorismate biosynthesis; chorismate from D-erythrose 4-phosphate and phosphoenolpyruvate: step 2/7. Its function is as follows. Catalyzes the conversion of 3-deoxy-D-arabino-heptulosonate 7-phosphate (DAHP) to dehydroquinate (DHQ). The protein is 3-dehydroquinate synthase of Acinetobacter baumannii (strain SDF).